The chain runs to 414 residues: Gamma-glutamyl phosphate reductase (414 aa).

This sequence belongs to the gamma-glutamyl phosphate reductase family.

The protein localises to the cytoplasm. It carries out the reaction L-glutamate 5-semialdehyde + phosphate + NADP(+) = L-glutamyl 5-phosphate + NADPH + H(+). Its pathway is amino-acid biosynthesis; L-proline biosynthesis; L-glutamate 5-semialdehyde from L-glutamate: step 2/2. Functionally, catalyzes the NADPH-dependent reduction of L-glutamate 5-phosphate into L-glutamate 5-semialdehyde and phosphate. The product spontaneously undergoes cyclization to form 1-pyrroline-5-carboxylate. This is Gamma-glutamyl phosphate reductase from Bacillus anthracis (strain A0248).